The sequence spans 99 residues: Plastocyanin (99 aa).

One can recognise a Plastocyanin-like domain in the interval isoleucine 1–asparagine 99. Residues histidine 37, cysteine 84, histidine 87, and methionine 92 each coordinate Cu cation.

It belongs to the plastocyanin family. Cu(2+) serves as cofactor.

It is found in the plastid. The protein localises to the chloroplast thylakoid membrane. Participates in electron transfer between P700 and the cytochrome b6-f complex in photosystem I. The sequence is that of Plastocyanin (PETE) from Capsella bursa-pastoris (Shepherd's purse).